The primary structure comprises 448 residues: tRNA(Ile)-lysidine synthase (448 aa).

Position 30 to 35 (Gly-30 to Ser-35) interacts with ATP.

This sequence belongs to the tRNA(Ile)-lysidine synthase family.

The protein localises to the cytoplasm. It carries out the reaction cytidine(34) in tRNA(Ile2) + L-lysine + ATP = lysidine(34) in tRNA(Ile2) + AMP + diphosphate + H(+). Functionally, ligates lysine onto the cytidine present at position 34 of the AUA codon-specific tRNA(Ile) that contains the anticodon CAU, in an ATP-dependent manner. Cytidine is converted to lysidine, thus changing the amino acid specificity of the tRNA from methionine to isoleucine. This chain is tRNA(Ile)-lysidine synthase, found in Idiomarina loihiensis (strain ATCC BAA-735 / DSM 15497 / L2-TR).